The chain runs to 351 residues: Trace amine-associated receptor 2 (351 aa).

The Extracellular segment spans residues 1–48 (MAVSSEQHELSHFKRTQTKKEKFNCSEYGNRSCPENERSLGVRVAMYS). Residues Asn-24 and Asn-30 are each glycosylated (N-linked (GlcNAc...) asparagine). 2 cysteine pairs are disulfide-bonded: Cys-33/Cys-197 and Cys-116/Cys-201. Residues 49–69 (FMAGSIFITIFGNLAMIISIS) traverse the membrane as a helical segment. Residues 70–79 (YFKQLHTPTN) lie on the Cytoplasmic side of the membrane. The chain crosses the membrane as a helical span at residues 80–100 (FLILSMAITDFLLGFTIMPYS). Topologically, residues 101–118 (MIRSVENCWYFGLTFCKI) are extracellular. The helical transmembrane segment at 119 to 139 (YYSFDLMLSITSIFHLCSVAI) threads the bilayer. Over 140-162 (DRFYAICYPLLYSTKITIPVIKR) the chain is Cytoplasmic. The helical transmembrane segment at 163 to 183 (LLLLCWSVPGAFAFGVVFSEA) threads the bilayer. The Extracellular segment spans residues 184–207 (YADGIEGYDILVACSSSCPVMFNK). A helical membrane pass occupies residues 208 to 228 (LWGTTLFMAGFFTPGSMMVGI). Over 229-263 (YGKIFAVSRKHAHAINNLRENQNNQVKKDKKAAKT) the chain is Cytoplasmic. Residues 264-284 (LGIVIGVFLLCWFPCFFTILL) form a helical membrane-spanning segment. At 285-299 (DPFLNFSTPVVLFDA) the chain is on the extracellular side. An N-linked (GlcNAc...) asparagine glycan is attached at Asn-289. Residues 300–322 (LTWFGYFNSTCNPLIYGFFYPWF) form a helical membrane-spanning segment. Topologically, residues 323–351 (RRALKYILLGKIFSSCFHNTILCMQKESE) are cytoplasmic.

The protein belongs to the G-protein coupled receptor 1 family. In terms of tissue distribution, not expressed in the pons, thalamus, hypothalamus, hippocampus, caudate, putamen, frontal cortex, basal forebrain, midbrain or liver.

It is found in the cell membrane. Functionally, orphan olfactory receptor specific for trace amines. Trace amine compounds are enriched in animal body fluids and act on trace amine-associated receptors (TAARs) to elicit both intraspecific and interspecific innate behaviors. Ligand-binding causes a conformation change that triggers signaling via the G(s)-class of G-proteins which activate adenylate cyclase. The polypeptide is Trace amine-associated receptor 2 (Homo sapiens (Human)).